Reading from the N-terminus, the 305-residue chain is NADH-ubiquinone oxidoreductase chain 1 (305 aa).

Transmembrane regions (helical) follow at residues 1–21 (MWVL…VAFL), 75–95 (MLMF…GFMY), 101–121 (ILFM…VGWI), 134–154 (LVST…SLMM), 173–193 (FAIL…IELN), 219–239 (FVLI…ILSL), 249–269 (IKFI…RGIL), and 285–305 (MLML…FLCI).

Belongs to the complex I subunit 1 family.

The protein resides in the mitochondrion inner membrane. It catalyses the reaction a ubiquinone + NADH + 5 H(+)(in) = a ubiquinol + NAD(+) + 4 H(+)(out). Functionally, core subunit of the mitochondrial membrane respiratory chain NADH dehydrogenase (Complex I) that is believed to belong to the minimal assembly required for catalysis. Complex I functions in the transfer of electrons from NADH to the respiratory chain. The immediate electron acceptor for the enzyme is believed to be ubiquinone. This chain is NADH-ubiquinone oxidoreductase chain 1 (ND1), found in Apis mellifera ligustica (Common honeybee).